The sequence spans 317 residues: 2,3-dihydroxyphenylpropionate/2,3-dihydroxicinnamic acid 1,2-dioxygenase (317 aa).

His-115 serves as the catalytic Proton donor. His-179 serves as the catalytic Proton acceptor.

Belongs to the LigB/MhpB extradiol dioxygenase family. As to quaternary structure, homotetramer. It depends on Fe(2+) as a cofactor.

The enzyme catalyses 3-(2,3-dihydroxyphenyl)propanoate + O2 = (2Z,4E)-2-hydroxy-6-oxonona-2,4-dienedioate + H(+). It catalyses the reaction (2E)-3-(2,3-dihydroxyphenyl)prop-2-enoate + O2 = (2Z,4E,7E)-2-hydroxy-6-oxonona-2,4,7-trienedioate + H(+). It participates in aromatic compound metabolism; 3-phenylpropanoate degradation. Functionally, catalyzes the non-heme iron(II)-dependent oxidative cleavage of 2,3-dihydroxyphenylpropionic acid and 2,3-dihydroxicinnamic acid into 2-hydroxy-6-ketononadienedioate and 2-hydroxy-6-ketononatrienedioate, respectively. The polypeptide is 2,3-dihydroxyphenylpropionate/2,3-dihydroxicinnamic acid 1,2-dioxygenase (Photorhabdus laumondii subsp. laumondii (strain DSM 15139 / CIP 105565 / TT01) (Photorhabdus luminescens subsp. laumondii)).